The primary structure comprises 327 residues: DNA-directed RNA polymerase subunit alpha (327 aa).

The segment at 1–233 (MVREKVKVST…NLFIPFLHVE (233 aa)) is alpha N-terminal domain (alpha-NTD). The segment at 267–327 (LAFQYIFIDQ…KKILDILEKK (61 aa)) is alpha C-terminal domain (alpha-CTD).

Belongs to the RNA polymerase alpha chain family. As to quaternary structure, in plastids the minimal PEP RNA polymerase catalytic core is composed of four subunits: alpha, beta, beta', and beta''. When a (nuclear-encoded) sigma factor is associated with the core the holoenzyme is formed, which can initiate transcription.

It is found in the plastid. Its subcellular location is the chloroplast. The catalysed reaction is RNA(n) + a ribonucleoside 5'-triphosphate = RNA(n+1) + diphosphate. Functionally, DNA-dependent RNA polymerase catalyzes the transcription of DNA into RNA using the four ribonucleoside triphosphates as substrates. The chain is DNA-directed RNA polymerase subunit alpha from Nasturtium officinale (Watercress).